The following is a 187-amino-acid chain: Small monomeric GTPase RhbA (187 aa).

Residues S17, V18, G19, K20, S21, S22, V33, and E34 each contribute to the GDP site. GTP is bound at residue S17. Residues G19, K20, S21, S22, and V33 each contribute to the GTP site. S21 contacts Mg(2+). Residues Y36, T39, N120, D123, and A152 each coordinate GTP. The Effector region motif lies at 36–44; the sequence is YYPTIENTF. T39 is a Mg(2+) binding site. GDP-binding residues include N120, D123, and A152. C184 carries the S-farnesyl cysteine lipid modification.

This sequence belongs to the small GTPase superfamily. Rheb family. In terms of processing, farnesylation is important for efficiently activating mTORC1-mediated signaling.

It localises to the cell membrane. It catalyses the reaction GTP + H2O = GDP + phosphate + H(+). Alternates between an inactive form bound to GDP and an active form bound to GTP. Its function is as follows. Small GTPase that acts as an allosteric activator of the canonical TOR pathway, an evolutionarily conserved central nutrient sensor that stimulates anabolic reactions and macromolecule biosynthesis to promote cellular biomass generation and growth. Plays a role in virulence. The protein is Small monomeric GTPase RhbA of Aspergillus fumigatus (strain ATCC MYA-4609 / CBS 101355 / FGSC A1100 / Af293) (Neosartorya fumigata).